The following is a 444-amino-acid chain: tRNA-2-methylthio-N(6)-dimethylallyladenosine synthase (444 aa).

The MTTase N-terminal domain occupies 2–119 (KKVYIKTFGC…LPDLIESRKQ (118 aa)). Cysteine 11, cysteine 48, cysteine 82, cysteine 156, cysteine 160, and cysteine 163 together coordinate [4Fe-4S] cluster. The 233-residue stretch at 142–374 (KVDGGAAFVS…NEVIEAKGYA (233 aa)) folds into the Radical SAM core domain. The TRAM domain occupies 377–440 (QSMVGTVQRV…PHSLAGEALT (64 aa)).

Belongs to the methylthiotransferase family. MiaB subfamily. Monomer. The cofactor is [4Fe-4S] cluster.

It is found in the cytoplasm. The catalysed reaction is N(6)-dimethylallyladenosine(37) in tRNA + (sulfur carrier)-SH + AH2 + 2 S-adenosyl-L-methionine = 2-methylsulfanyl-N(6)-dimethylallyladenosine(37) in tRNA + (sulfur carrier)-H + 5'-deoxyadenosine + L-methionine + A + S-adenosyl-L-homocysteine + 2 H(+). Its function is as follows. Catalyzes the methylthiolation of N6-(dimethylallyl)adenosine (i(6)A), leading to the formation of 2-methylthio-N6-(dimethylallyl)adenosine (ms(2)i(6)A) at position 37 in tRNAs that read codons beginning with uridine. This is tRNA-2-methylthio-N(6)-dimethylallyladenosine synthase from Chromobacterium violaceum (strain ATCC 12472 / DSM 30191 / JCM 1249 / CCUG 213 / NBRC 12614 / NCIMB 9131 / NCTC 9757 / MK).